The sequence spans 363 residues: Large ribosomal subunit protein uL4 (363 aa).

This sequence belongs to the universal ribosomal protein uL4 family. Component of the large ribosomal subunit. Mature ribosomes consist of a small (40S) and a large (60S) subunit. The 40S subunit contains about 32 different proteins and 1 molecule of RNA (18S). The 60S subunit contains 45 different proteins and 3 molecules of RNA (25S, 5.8S and 5S).

The protein localises to the cytoplasm. Component of the ribosome, a large ribonucleoprotein complex responsible for the synthesis of proteins in the cell. The small ribosomal subunit (SSU) binds messenger RNAs (mRNAs) and translates the encoded message by selecting cognate aminoacyl-transfer RNA (tRNA) molecules. The large subunit (LSU) contains the ribosomal catalytic site termed the peptidyl transferase center (PTC), which catalyzes the formation of peptide bonds, thereby polymerizing the amino acids delivered by tRNAs into a polypeptide chain. The nascent polypeptides leave the ribosome through a tunnel in the LSU and interact with protein factors that function in enzymatic processing, targeting, and the membrane insertion of nascent chains at the exit of the ribosomal tunnel. The chain is Large ribosomal subunit protein uL4 from Candida albicans (strain SC5314 / ATCC MYA-2876) (Yeast).